Consider the following 3016-residue polypeptide: Genome polyprotein (3016 aa).

S2 is modified (N-acetylserine; by host). An interaction with STAT1 region spans residues S2–K23. The interaction with EIF2AK2/PKR stretch occupies residues S2 to P58. Residues S2 to R59 are interaction with DDX3X. Residues S2–H75 form a disordered region. Residues S2–N168 are Cytoplasmic-facing. 2 consecutive short sequence motifs (nuclear localization signal) follow at residues P5–R13 and P38–R43. Basic residues predominate over residues P7–N16. The span at G32–R47 shows a compositional bias: low complexity. The residue at position 53 (S53) is a Phosphoserine; by host. Short sequence motifs (nuclear localization signal) lie at residues P58–P64 and P66–S71. Residues S99 and S116 each carry the phosphoserine; by host modification. An important for endoplasmic reticulum and mitochondrial localization region spans residues P112–A152. Residues V122–S173 are interaction with APOA2. An important for lipid droplets localization region spans residues Y164 to G167. A helical transmembrane segment spans residues L169–A189. Residues L178–A191 constitute a propeptide, ER anchor for the core protein, removed in mature form by host signal peptidase. The Lumenal portion of the chain corresponds to S190–A358. N-linked (GlcNAc...) asparagine; by host glycosylation is found at N196, N209, N234, and N250. Residues L265–R296 are important for fusion. An N-linked (GlcNAc...) asparagine; by host glycan is attached at N305. Residues L359–A379 form a helical membrane-spanning segment. Topologically, residues G380–V727 are lumenal. The segment at T385–Q411 is HVR1. Residues N416, N422, and N429 are each glycosylated (N-linked (GlcNAc...) (high mannose) asparagine; by host). 4 disulfides stabilise this stretch: C428-C552, C451-C458, C486-C494, and C503-C508. Residue N447 is glycosylated (N-linked (GlcNAc...) asparagine; by host). The interval A474–G478 is HVR2. N475 is a glycosylation site (N-linked (GlcNAc...) asparagine; by host). The tract at residues S480–P493 is CD81-binding 1. N-linked (GlcNAc...) asparagine; by host glycosylation occurs at N532. Positions P544–G551 are CD81-binding 2. Residue N556 is glycosylated (N-linked (GlcNAc...) asparagine; by host). 4 cysteine pairs are disulfide-bonded: C564-C569, C583-C587, C599-C622, and C609-C646. N-linked (GlcNAc...) (high mannose) asparagine; by host glycosylation is found at N625 and N647. A disulfide bridge links C654 with C679. The tract at residues V662–Q673 is PKR/eIF2-alpha phosphorylation homology domain (PePHD). A helical membrane pass occupies residues L728–A748. Over A749–T759 the chain is Lumenal. A helical membrane pass occupies residues S760–I780. The Cytoplasmic portion of the chain corresponds to R781 to A784. Residues A785 to L805 form a helical membrane-spanning segment. At P806–E815 the chain is on the lumenal side. The chain crosses the membrane as a helical span at residues E816 to A836. Residues Y837–H883 lie on the Cytoplasmic side of the membrane. Residues P884–L904 traverse the membrane as a helical segment. Residues Q905–V930 are Lumenal-facing. The region spanning Q905–L1028 is the Peptidase C18 domain. Positions Y906–R1208 are protease NS2-3. C924 carries S-palmitoyl cysteine; by host lipidation. Residues A931–I951 form a helical membrane-spanning segment. Positions A931–I951 are interaction with host SCPS1. The Cytoplasmic portion of the chain corresponds to Y952–T1659. Active-site for protease NS2 activity; shared with dimeric partner residues include H954, E974, and C995. The 182-residue stretch at A1029–P1210 folds into the Peptidase S29 domain. Active-site charge relay system; for serine protease NS3 activity residues include H1085 and D1109. Zn(2+)-binding residues include C1125 and C1127. Catalysis depends on S1167, which acts as the Charge relay system; for serine protease NS3 activity. Residues C1173 and H1177 each contribute to the Zn(2+) site. The Helicase ATP-binding domain occupies P1219–S1371. A1232–S1239 serves as a coordination point for ATP. Residues S1239 and E1319 each contribute to the Mg(2+) site. Positions D1318–H1321 match the DECH box motif. Residues Q1488–V1500 form an RNA-binding region. A helical transmembrane segment spans residues S1660 to G1680. The tract at residues C1681–G1692 is NS3-binding. Topologically, residues C1681–T1807 are cytoplasmic. The chain crosses the membrane as a helical span at residues T1808–S1828. Residues T1829 to A1830 lie on the Lumenal side of the membrane. A helical transmembrane segment spans residues F1831–V1851. D1852 is a topological domain (cytoplasmic). A helical membrane pass occupies residues I1853–G1873. At E1874–N1883 the chain is on the lumenal side. The helical transmembrane segment at L1884–L1904 threads the bilayer. Residues R1905–C1974 are Cytoplasmic-facing. A lipid anchor (S-palmitoyl cysteine; by host) is attached at C1974. An intramembrane segment occupies S1975 to A2004. At L2005 to R2995 the chain is on the cytoplasmic side. Zn(2+) contacts are provided by C2013, C2031, C2033, and C2054. Residues E2122–A2210 are FKBP8-binding. The segment at E2122–V2335 is transcriptional activation. The interaction with non-structural protein 4A stretch occupies residues P2137 to P2141. The interaction with host SKP2 stretch occupies residues R2191–E2443. Phosphoserine; by host is present on residues S2196, S2199, S2203, S2206, S2209, and S2212. Residues S2212–K2251 are ISDR. The tract at residues S2212–H2277 is interaction with EIF2AK2/PKR. Positions K2251–Y2309 are NS4B-binding. A V3 region spans residues E2302–A2379. The SH3-binding signature appears at P2325–P2328. A Nuclear localization signal motif is present at residues P2330–L2338. K2353 is covalently cross-linked (Glycyl lysine isopeptide (Lys-Gly) (interchain with G-Cter in ubiquitin)). The segment at K2353–T2414 is disordered. Residues F2355–S2376 show a composition bias toward polar residues. S2454 is subject to Phosphoserine; by host. Residues P2639–D2757 enclose the RdRp catalytic domain. Mg(2+) is bound by residues D2645, D2743, and D2744. The helical transmembrane segment at I2996 to R3016 threads the bilayer.

The protein belongs to the hepacivirus polyprotein family. In terms of assembly, homooligomer. Interacts with E1 (via C-terminus). Interacts with the non-structural protein 5A. Interacts (via N-terminus) with host STAT1 (via SH2 domain); this interaction results in decreased STAT1 phosphorylation and ubiquitin-mediated proteasome-dependent STAT1 degradation, leading to decreased IFN-stimulated gene transcription. Interacts with host STAT3; this interaction constitutively activates STAT3. Interacts with host LTBR receptor. Interacts with host TNFRSF1A receptor and possibly induces apoptosis. Interacts with host HNRPK. Interacts with host YWHAE. Interacts with host UBE3A/E6AP. Interacts with host DDX3X. Interacts with host APOA2. Interacts with host RXRA protein. Interacts with host SP110 isoform 3/Sp110b; this interaction sequesters the transcriptional corepressor SP110 away from the nucleus. Interacts with host CREB3 nuclear transcription protein; this interaction triggers cell transformation. Interacts with host ACY3. Interacts with host C1QR1. Interacts with host RBM24; this interaction, which enhances the interaction of the mature core protein with 5'-UTR, may inhibit viral translation and favor replication. Interacts with host EIF2AK2/PKR; this interaction induces the autophosphorylation of EIF2AK2. Part of the viral assembly initiation complex composed of NS2, E1, E2, NS3, NS4A, NS5A and the mature core protein. Forms a heterodimer with envelope glycoprotein E2. Interacts with mature core protein. Interacts with protease NS2. The heterodimer E1/E2 interacts with host CLDN1; this interaction plays a role in viral entry into host cell. Interacts with host SPSB2 (via C-terminus). Part of the viral assembly initiation complex composed of NS2, E1, E2, NS3, NS4A, NS5A and the mature core protein. Interacts with host NEURL3; this interaction prevents E1 binding to glycoprotein E2. As to quaternary structure, forms a heterodimer with envelope glycoprotein E1. Interacts with host CD81 and SCARB1 receptors; these interactions play a role in viral entry into host cell. Interacts with host EIF2AK2/PKR; this interaction inhibits EIF2AK2 and probably allows the virus to evade the innate immune response. Interacts with host CD209/DC-SIGN and CLEC4M/DC-SIGNR. Interact with host SPCS1; this interaction is essential for viral particle assembly. Interacts with protease NS2. The heterodimer E1/E2 interacts with host CLDN1; this interaction plays a role in viral entry into host cell. Part of the viral assembly initiation complex composed of NS2, E1, E2, NS3, NS4A, NS5A and the mature core protein. Interacts with host SLC3A2/4F2hc; the interaction may facilitate viral entry into host cell. Interacts with human PLSCR1. In terms of assembly, homohexamer. Homoheptamer. Interacts with protease NS2. Homodimer. Interacts with host SPCS1; this interaction is essential for viral particle assembly. Interacts with envelope glycoprotein E1. Interacts with envelope glycoprotein E2. Interacts with viroporin p7. Interacts with serine protease/helicase NS3. Part of the replication complex composed of NS2, NS3, NS4A, NS4B, NS5A and the RNA-directed RNA polymerase embedded in an ER-derived membranous web. Part of the viral assembly initiation complex composed of NS2, E1, E2, NS3, NS4A, NS5A and the mature core protein. As to quaternary structure, interacts with protease NS2. Interacts with non-structural protein 4A; this interaction stabilizes the folding of NS3 serine protease. NS3-NS4A interaction is essential for NS3 activation and allows membrane anchorage of the latter. NS3/NS4A complex also prevents phosphorylation of host IRF3, thus preventing the establishment of dsRNA induced antiviral state. Interacts with host MAVS; this interaction leads to the cleavage and inhibition of host MAVS. Interacts with host TICAM1; this interaction leads to the cleavage and inhibition of host TICAM1. Interacts with host TANK-binding kinase/TBK1; this interaction results in the inhibition of the association between TBK1 and IRF3, which leads to the inhibition of IRF3 activation. Interacts with host RBM24. Part of the replication complex composed of NS2, NS3, NS4A, NS4B, NS5A and the RNA-directed RNA polymerase embedded in an ER-derived membranous web. Part of the viral assembly initiation complex composed of NS2, E1, E2, NS3, NS4A, NS5A and the mature core protein. In terms of assembly, interacts with NS3 serine protease; this interaction stabilizes the folding of NS3 serine protease. NS3-NS4A interaction is essential for NS3 activation and allows membrane anchorage of the latter. Interacts with non-structural protein 5A (via N-terminus). Part of the replication complex composed of NS2, NS3, NS4A, NS4B, NS5A and the RNA-directed RNA polymerase embedded in an ER-derived membranous web. Part of the viral assembly initiation complex composed of NS2, E1, E2, NS3, NS4A, NS5A and the mature core protein. Homomultimer. Interacts with non-structural protein NS5A. Interacts with host PLA2G4C; this interaction likely initiates the recruitment of replication complexes to lipid droplets. Interacts with host STING; this interaction disrupts the interaction between STING and TBK1 thereby suppressing the interferon signaling. Part of the replication complex composed of NS2, NS3, NS4A, NS4B, NS5A and the RNA-directed RNA polymerase embedded in an ER-derived membranous web. As to quaternary structure, monomer. Homodimer; dimerization is required for RNA-binding. Interacts with the mature core protein. Interacts (via N-terminus) with non-structural protein 4A. Interacts with non-structural protein 4B. Interacts (via region D2) with RNA-directed RNA polymerase. Part of the viral assembly initiation complex composed of NS2, E1, E2, NS3, NS4A, NS5A and the mature core protein. Part of the replication complex composed of NS2, NS3, NS4A, NS4B, NS5A and the RNA-directed RNA polymerase embedded in an ER-derived membranous web. Interacts with host GRB2. Interacts with host BIN1. Interacts with host PIK3R1. Interacts with host SRCAP. Interacts with host FKBP8. Interacts (via C-terminus) with host VAPB (via MSP domain). Interacts with host EIF2AK2/PKR; this interaction leads to disruption of EIF2AK2 dimerization by NS5A and probably allows the virus to evade the innate immune response. Interacts (via N-terminus) with host PACSIN2 (via N-terminus); this interaction attenuates protein kinase C alpha-mediated phosphorylation of PACSIN2 by disrupting the interaction between PACSIN2 and PRKCA. Interacts (via N-terminus) with host SRC kinase (via SH2 domain). Interacts with most Src-family kinases. Interacts with host IFI27 and SKP2; promotes the ubiquitin-mediated proteasomal degradation of NS5A. Interacts with host GPS2. Interacts with host TNFRSF21; this interaction allows the modulation by the virus of JNK, p38 MAPK, STAT3, and Akt signaling pathways in a DR6-dependent manner. Interacts (via N-terminus) with host CIDEB (via N-terminus); this interaction seems to regulate the association of HCV particles with APOE. Interacts with host CHKA/Choline Kinase-alpha; CHKA bridges host PI4KA and NS5A and potentiates NS5A-stimulated PI4KA activity, which then facilitates the targeting of the ternary complex to the ER for viral replication. Interacts with host SPSB2 (via C-terminus); this interaction targets NS5A for ubiquitination and degradation. Interacts with host RAB18; this interaction may promote the association of NS5A and other replicase components with lipid droplets. Interacts (via region D2) with host PPIA/CYPA; the interaction stimulates RNA-binding ability of NS5A and is dependent on the peptidyl-prolyl cis-trans isomerase activity of PPIA/CYPA. Interacts with host TRIM14; this interaction induces the degradation of NS5A. In terms of assembly, homooligomer. Interacts with non-structural protein 5A. Interacts with host VAPB. Interacts with host PRK2/PKN2. Interacts with host HNRNPA1 and SEPT6; these interactions facilitate viral replication. Part of the replication complex composed of NS2, NS3, NS4A, NS4B, NS5A and the RNA-directed RNA polymerase. It depends on Zn(2+) as a cofactor. The cofactor is Mg(2+). Post-translationally, specific enzymatic cleavages in vivo yield mature proteins. The structural proteins, core, E1, E2 and p7 are produced by proteolytic processing by host signal peptidases. The core protein precursor is synthesized as a 23 kDa, which is retained in the ER membrane through the hydrophobic signal peptide. Cleavage by the signal peptidase releases the 21 kDa mature core protein. The cleavage of the core protein precursor occurs between aminoacids 176 and 188 but the exact cleavage site is not known. Some degraded forms of the core protein appear as well during the course of infection. The other proteins (p7, NS2, NS3, NS4A, NS4B, NS5A and NS5B) are cleaved by the viral proteases. Autoprocessing between NS2 and NS3 is mediated by the NS2 cysteine protease catalytic domain and regulated by the NS3 N-terminal domain. Phosphorylated by host PKC and PKA. In terms of processing, ubiquitinated; mediated by UBE3A and leading to core protein subsequent proteasomal degradation. Post-translationally, highly N-glycosylated. Palmitoylation is required for NS2/3 autoprocessing and E2 recruitment to membranes. In terms of processing, palmitoylated. This modification may play a role in its polymerization or in protein-protein interactions. Post-translationally, phosphorylated on serines in a basal form termed p56. p58 is a hyperphosphorylated form of p56. p56 and p58 coexist in the cell in roughly equivalent amounts. Hyperphosphorylation is dependent on the presence of NS4A. Host CSNK1A1/CKI-alpha or RPS6KB1 kinases may be responsible for NS5A phosphorylation. Tyrosine phosphorylation is essential for the interaction with host SRC. In terms of processing, ubiquitinated. Ubiquitination, most probably at Lys-2353, mediated by host IFI27 and SKP2 leads to proteasomal degradation, restricting viral infection. Ubiquitination by host TRIM22 leads to interruption of viral replication. Post-translationally, the N-terminus is phosphorylated by host PRK2/PKN2.

The protein localises to the host endoplasmic reticulum membrane. Its subcellular location is the host mitochondrion membrane. It is found in the virion. It localises to the host cytoplasm. The protein resides in the host nucleus. The protein localises to the host lipid droplet. Its subcellular location is the virion membrane. It is found in the host mitochondrion. It localises to the host cell membrane. The protein resides in the host perinuclear region. It carries out the reaction Hydrolysis of four peptide bonds in the viral precursor polyprotein, commonly with Asp or Glu in the P6 position, Cys or Thr in P1 and Ser or Ala in P1'.. It catalyses the reaction a ribonucleoside 5'-triphosphate + H2O = a ribonucleoside 5'-diphosphate + phosphate + H(+). The enzyme catalyses ATP + H2O = ADP + phosphate + H(+). The catalysed reaction is RNA(n) + a ribonucleoside 5'-triphosphate = RNA(n+1) + diphosphate. With respect to regulation, inhibited by the antiviral drug hexamethylene amiloride. Inhibition by amantadine appears to be genotype-dependent. Also inhibited by long-alkyl-chain iminosugar derivatives. Its activity is regulated as follows. Activity is up-regulated by PRK2/PKN2-mediated phosphorylation. Packages viral RNA to form a viral nucleocapsid, and promotes virion budding. Participates in the viral particle production as a result of its interaction with the non-structural protein 5A. Binds RNA and may function as a RNA chaperone to induce the RNA structural rearrangements taking place during virus replication. Modulates viral translation initiation by interacting with viral IRES and 40S ribosomal subunit. Affects various cell signaling pathways, host immunity and lipid metabolism. Prevents the establishment of cellular antiviral state by blocking the interferon-alpha/beta (IFN-alpha/beta) and IFN-gamma signaling pathways and by blocking the formation of phosphorylated STAT1 and promoting ubiquitin-mediated proteasome-dependent degradation of STAT1. Activates STAT3 leading to cellular transformation. Regulates the activity of cellular genes, including c-myc and c-fos. May repress the promoter of p53, and sequester CREB3 and SP110 isoform 3/Sp110b in the cytoplasm. Represses cell cycle negative regulating factor CDKN1A, thereby interrupting an important check point of normal cell cycle regulation. Targets transcription factors involved in the regulation of inflammatory responses and in the immune response: suppresses TNF-induced NF-kappa-B activation, and activates AP-1. Binds to dendritic cells (DCs) via C1QR1, resulting in down-regulation of T-lymphocytes proliferation. Alters lipid metabolism by interacting with hepatocellular proteins involved in lipid accumulation and storage. Induces up-regulation of FAS promoter activity, and thereby contributes to the increased triglyceride accumulation in hepatocytes (steatosis). Functionally, forms a heterodimer with envelope glycoprotein E2, which mediates virus attachment to the host cell, virion internalization through clathrin-dependent endocytosis and fusion with host membrane. Fusion with the host cell is most likely mediated by both E1 and E2, through conformational rearrangements of the heterodimer required for fusion rather than a classical class II fusion mechanism. E1/E2 heterodimer binds host apolipoproteins such as APOB and ApoE thereby forming a lipo-viro-particle (LVP). APOE associated to the LVP allows the initial virus attachment to cell surface receptors such as the heparan sulfate proteoglycans (HSPGs), syndecan-1 (SDC1), syndecan-1 (SDC2), the low-density lipoprotein receptor (LDLR) and scavenger receptor class B type I (SCARB1). The cholesterol transfer activity of SCARB1 allows E2 exposure and binding of E2 to SCARB1 and the tetraspanin CD81. E1/E2 heterodimer binding on CD81 activates the epithelial growth factor receptor (EGFR) signaling pathway. Diffusion of the complex E1-E2-EGFR-SCARB1-CD81 to the cell lateral membrane allows further interaction with Claudin 1 (CLDN1) and occludin (OCLN) to finally trigger HCV entry. Its function is as follows. Forms a heterodimer with envelope glycoprotein E1, which mediates virus attachment to the host cell, virion internalization through clathrin-dependent endocytosis and fusion with host membrane. Fusion with the host cell is most likely mediated by both E1 and E2, through conformational rearrangements of the heterodimer required for fusion rather than a classical class II fusion mechanism. The interaction between envelope glycoprotein E2 and host apolipoprotein E/APOE allows the proper assembly, maturation and infectivity of the viral particles. This interaction is probably promoted via the up-regulation of cellular autophagy by the virus. E1/E2 heterodimer binds host apolipoproteins such as APOB and APOE thereby forming a lipo-viro-particle (LVP). APOE associated to the LVP allows the initial virus attachment to cell surface receptors such as the heparan sulfate proteoglycans (HSPGs), syndecan-1 (SDC1), syndecan-1 (SDC2), the low-density lipoprotein receptor (LDLR) and scavenger receptor class B type I (SCARB1). The cholesterol transfer activity of SCARB1 allows E2 exposure and binding of E2 to SCARB1 and the tetraspanin CD81. E1/E2 heterodimer binding on CD81 activates the epithelial growth factor receptor (EGFR) signaling pathway. Diffusion of the complex E1-E2-EGFR-SCARB1-CD81 to the cell lateral membrane allows further interaction with Claudin 1 (CLDN1) and occludin (OCLN) to finally trigger HCV entry. Inhibits host EIF2AK2/PKR activation, preventing the establishment of an antiviral state. Viral ligand for CD209/DC-SIGN and CLEC4M/DC-SIGNR, which are respectively found on dendritic cells (DCs), and on liver sinusoidal endothelial cells and macrophage-like cells of lymph node sinuses. These interactions allow the capture of circulating HCV particles by these cells and subsequent facilitated transmission to permissive cells such as hepatocytes and lymphocyte subpopulations. The interaction between E2 and host amino acid transporter complex formed by SLC3A2 and SLC7A5/LAT1 may facilitate viral entry into host cell. In terms of biological role, ion channel protein that acts as a viroporin and plays an essential role in the assembly, envelopment and secretion of viral particles. Regulates the host cell secretory pathway, which induces the intracellular retention of viral glycoproteins and favors assembly of viral particles. Creates a pore in acidic organelles and releases Ca(2+) and H(+) in the cytoplasm of infected cells, leading to a productive viral infection. High levels of cytoplasmic Ca(2+) may trigger membrane trafficking and transport of viral ER-associated proteins to viroplasms, sites of viral genome replication. This ionic imbalance induces the assembly of the inflammasome complex, which triggers the maturation of pro-IL-1beta into IL-1beta through the action of caspase-1. Targets also host mitochondria and induces mitochondrial depolarization. In addition of its role as a viroporin, acts as a lipid raft adhesion factor. Cysteine protease required for the proteolytic auto-cleavage between the non-structural proteins NS2 and NS3. The N-terminus of NS3 is required for the function of NS2 protease (active region NS2-3). Promotes the initiation of viral particle assembly by mediating the interaction between structural and non-structural proteins. Functionally, displays three enzymatic activities: serine protease with a chymotrypsin-like fold, NTPase and RNA helicase. NS3 serine protease, in association with NS4A, is responsible for the cleavages of NS3-NS4A, NS4A-NS4B, NS4B-NS5A and NS5A-NS5B. The NS3/NS4A complex prevents phosphorylation of host IRF3, thus preventing the establishment of dsRNA induced antiviral state. The NS3/NS4A complex induces host amino acid transporter component SLC3A2, thus contributing to HCV propagation. NS3 RNA helicase binds to RNA and unwinds both dsDNA and dsRNA in the 3' to 5' direction, and likely resolves RNA complicated stable secondary structures in the template strand. Binds a single ATP and catalyzes the unzipping of a single base pair of dsRNA. Inhibits host antiviral proteins TBK1 and IRF3 thereby preventing the establishment of an antiviral state. Cleaves host MAVS/CARDIF thereby preventing the establishment of an antiviral state. Cleaves host TICAM1/TRIF, thereby disrupting TLR3 signaling and preventing the establishment of an antiviral state. Its function is as follows. Peptide cofactor which forms a non-covalent complex with the N-terminal of NS3 serine protease. The NS3/NS4A complex prevents phosphorylation of host IRF3, thus preventing the establishment of dsRNA induced antiviral state. The NS3/NS4A complex induces host amino acid transporter component SLC3A2, thus contributing to HCV propagation. In terms of biological role, induces a specific membrane alteration that serves as a scaffold for the virus replication complex. This membrane alteration gives rise to the so-called ER-derived membranous web that contains the replication complex. NS4B self-interaction contributes to its function in membranous web formation. Promotes host TRIF protein degradation in a CASP8-dependent manner thereby inhibiting host TLR3-mediated interferon signaling. Disrupts the interaction between STING and TBK1 contributing to the inhibition of interferon signaling. Phosphorylated protein that is indispensable for viral replication and assembly. Both hypo- and hyperphosphorylated states are required for the viral life cycle. The hyperphosphorylated form of NS5A is an inhibitor of viral replication. Involved in RNA-binding and especially in binding to the viral genome. Zinc is essential for RNA-binding. Participates in the viral particle production as a result of its interaction with the mature viral core protein. Its interaction with host VAPB may target the viral replication complex to vesicles. Down-regulates viral IRES translation initiation. Mediates interferon resistance, presumably by interacting with and inhibiting host EIF2AK2/PKR. Prevents BIN1-induced apoptosis. Acts as a transcriptional activator of some host genes important for viral replication when localized in the nucleus. Via the interaction with host PACSIN2, modulates lipid droplet formation in order to promote virion assembly. Modulates TNFRSF21/DR6 signaling pathway for viral propagation. Functionally, RNA-dependent RNA polymerase that performs primer-template recognition and RNA synthesis during viral replication. Initiates RNA transcription/replication at a flavin adenine dinucleotide (FAD), resulting in a 5'- FAD cap on viral RNAs. In this way, recognition of viral 5' RNA by host pattern recognition receptors can be bypassed, thereby evading activation of antiviral pathways. The chain is Genome polyprotein from Hepatitis C virus genotype 6k (isolate VN405) (HCV).